A 324-amino-acid polypeptide reads, in one-letter code: Acetyl-coenzyme A carboxylase carboxyl transferase subunit alpha (324 aa).

Residues 44 to 297 form the CoA carboxyltransferase C-terminal domain; it reads LEERAKQLRY…KAALLRNLAE (254 aa).

Belongs to the AccA family. Acetyl-CoA carboxylase is a heterohexamer composed of biotin carboxyl carrier protein (AccB), biotin carboxylase (AccC) and two subunits each of ACCase subunit alpha (AccA) and ACCase subunit beta (AccD).

It is found in the cytoplasm. The catalysed reaction is N(6)-carboxybiotinyl-L-lysyl-[protein] + acetyl-CoA = N(6)-biotinyl-L-lysyl-[protein] + malonyl-CoA. It functions in the pathway lipid metabolism; malonyl-CoA biosynthesis; malonyl-CoA from acetyl-CoA: step 1/1. In terms of biological role, component of the acetyl coenzyme A carboxylase (ACC) complex. First, biotin carboxylase catalyzes the carboxylation of biotin on its carrier protein (BCCP) and then the CO(2) group is transferred by the carboxyltransferase to acetyl-CoA to form malonyl-CoA. The chain is Acetyl-coenzyme A carboxylase carboxyl transferase subunit alpha from Thermosynechococcus vestitus (strain NIES-2133 / IAM M-273 / BP-1).